The chain runs to 356 residues: Dual-specificity RNA methyltransferase RlmN (356 aa).

E87 functions as the Proton acceptor in the catalytic mechanism. The 234-residue stretch at 106 to 339 (QEAKYTICVS…CTIRDSKGID (234 aa)) folds into the Radical SAM core domain. C113 and C344 are oxidised to a cystine. Positions 120, 124, and 127 each coordinate [4Fe-4S] cluster. Residues 170-171 (GE), S202, 225-227 (SLH), and N301 contribute to the S-adenosyl-L-methionine site. The S-methylcysteine intermediate role is filled by C344.

The protein belongs to the radical SAM superfamily. RlmN family. Requires [4Fe-4S] cluster as cofactor.

It localises to the cytoplasm. The catalysed reaction is adenosine(2503) in 23S rRNA + 2 reduced [2Fe-2S]-[ferredoxin] + 2 S-adenosyl-L-methionine = 2-methyladenosine(2503) in 23S rRNA + 5'-deoxyadenosine + L-methionine + 2 oxidized [2Fe-2S]-[ferredoxin] + S-adenosyl-L-homocysteine. The enzyme catalyses adenosine(37) in tRNA + 2 reduced [2Fe-2S]-[ferredoxin] + 2 S-adenosyl-L-methionine = 2-methyladenosine(37) in tRNA + 5'-deoxyadenosine + L-methionine + 2 oxidized [2Fe-2S]-[ferredoxin] + S-adenosyl-L-homocysteine. Its function is as follows. Specifically methylates position 2 of adenine 2503 in 23S rRNA and position 2 of adenine 37 in tRNAs. m2A2503 modification seems to play a crucial role in the proofreading step occurring at the peptidyl transferase center and thus would serve to optimize ribosomal fidelity. The sequence is that of Dual-specificity RNA methyltransferase RlmN from Sulfurimonas denitrificans (strain ATCC 33889 / DSM 1251) (Thiomicrospira denitrificans (strain ATCC 33889 / DSM 1251)).